A 423-amino-acid chain; its full sequence is Kynureninase (423 aa).

Residues Leu105, Ser106, 133-136, Asp218, His221, and Tyr243 contribute to the pyridoxal 5'-phosphate site; that span reads FPSD. Residue Lys244 is modified to N6-(pyridoxal phosphate)lysine. The pyridoxal 5'-phosphate site is built by Trp273 and Asn301.

This sequence belongs to the kynureninase family. In terms of assembly, homodimer. The cofactor is pyridoxal 5'-phosphate.

The catalysed reaction is L-kynurenine + H2O = anthranilate + L-alanine + H(+). It catalyses the reaction 3-hydroxy-L-kynurenine + H2O = 3-hydroxyanthranilate + L-alanine + H(+). It participates in amino-acid degradation; L-kynurenine degradation; L-alanine and anthranilate from L-kynurenine: step 1/1. It functions in the pathway cofactor biosynthesis; NAD(+) biosynthesis; quinolinate from L-kynurenine: step 2/3. Its function is as follows. Catalyzes the cleavage of L-kynurenine (L-Kyn) and L-3-hydroxykynurenine (L-3OHKyn) into anthranilic acid (AA) and 3-hydroxyanthranilic acid (3-OHAA), respectively. The sequence is that of Kynureninase from Xanthomonas oryzae pv. oryzae (strain KACC10331 / KXO85).